The primary structure comprises 162 residues: Cytochrome c-type biogenesis protein CcmE (162 aa).

At 1–8 (MNPVRKKR) the chain is on the cytoplasmic side. The helical; Signal-anchor for type II membrane protein transmembrane segment at 9–29 (LIIVLAIVAGVGAAVGLALSA) threads the bilayer. Residues 30 to 162 (LQQNINLFYT…GETSYNQEGK (133 aa)) lie on the Periplasmic side of the membrane. Heme is bound by residues histidine 124 and tyrosine 128. Positions 139–148 (DSGQLKHYEN) are enriched in basic and acidic residues. Residues 139 to 162 (DSGQLKHYENGKAAGETSYNQEGK) are disordered.

The protein belongs to the CcmE/CycJ family.

It localises to the cell inner membrane. Heme chaperone required for the biogenesis of c-type cytochromes. Transiently binds heme delivered by CcmC and transfers the heme to apo-cytochromes in a process facilitated by CcmF and CcmH. The polypeptide is Cytochrome c-type biogenesis protein CcmE (Pseudomonas aeruginosa (strain ATCC 15692 / DSM 22644 / CIP 104116 / JCM 14847 / LMG 12228 / 1C / PRS 101 / PAO1)).